A 333-amino-acid polypeptide reads, in one-letter code: Foldase protein PrsA (333 aa).

Residues 1 to 19 (MKKRHLLIAGLACMTILGA) form the signal peptide. Cys20 carries the N-palmitoyl cysteine lipid modification. The S-diacylglycerol cysteine moiety is linked to residue Cys20. Positions 155 to 245 (LIEVEASHIL…YGYHIILVTD (91 aa)) constitute a PpiC domain. Positions 291 to 333 (GLFDLPDAPPVEDTPEIDGEDASDEAEDQAEDADENAEEEDES) are disordered. The segment covering 303–333 (DTPEIDGEDASDEAEDQAEDADENAEEEDES) has biased composition (acidic residues).

Belongs to the PrsA family.

It is found in the cell membrane. It carries out the reaction [protein]-peptidylproline (omega=180) = [protein]-peptidylproline (omega=0). Functionally, plays a major role in protein secretion by helping the post-translocational extracellular folding of several secreted proteins. This Halalkalibacterium halodurans (strain ATCC BAA-125 / DSM 18197 / FERM 7344 / JCM 9153 / C-125) (Bacillus halodurans) protein is Foldase protein PrsA.